Reading from the N-terminus, the 321-residue chain is 2-oxoglutarate-dependent dioxygenase frbH (321 aa).

The tract at residues Ser-77 to Asp-97 is disordered. The 105-residue stretch at Glu-169 to Ala-273 folds into the Fe2OG dioxygenase domain. 3 residues coordinate Fe cation: His-194, Asp-196, and His-251. Arg-264 is a 2-oxoglutarate binding site.

The protein belongs to the iron/ascorbate-dependent oxidoreductase family.

Its pathway is antifungal biosynthesis. Functionally, 2-oxoglutarate-dependent dioxygenase; part of the gene cluster that mediates the biosynthesis of the antifungal antibiotic FR901469, an inhibitor of beta-1,3-glucansynthase, exerting antifungal activity against the pathogenes Candida albicans and Aspergillus fumigatus. FR901469 is a cyclic depsipeptide containing 12 amino acid residues and a fatty acid chain. The NRPS frbI contains 12 modules responsible for the formation of the depsipeptide backbone which is denoted as Acyl-Thr-Ala-Tyr-Val-4OHPro-Thr-Thr-3OHPro-threo3OHGln-Gly-Thr-Orn-OH (C71H116N14O23). The PKS frbB is probably involved in the production of the hydrocarbon chain, and the acyl-CoA ligase frbC might be involved in the transport of the chain to the peptide ptoduct of frbI. Because FR901469 contains 3 hydroxylated amino acid residues, the 3 oxygenases frbA, frbH, and frbJ might be participating in amino acid hydroxylation. As no thioesterase domains were detected in frbI or frbB, the thioesterases frbD and frbE may instead release and cyclize the products of the NRPS and PKS, respectively. The chain is 2-oxoglutarate-dependent dioxygenase frbH from Dothideomycetidae sp. (strain 11243) (Fungal sp. (strain No.11243)).